Reading from the N-terminus, the 587-residue chain is 5-aminolevulinate synthase, erythroid-specific, mitochondrial (587 aa).

The N-terminal 49 residues, 1–49 (MVTAAMLLQRCPVLIRSPTGLLGKMIKTHQFLFGIGRCPILATQGPSFS), are a transit peptide targeting the mitochondrion. Arg-163 lines the succinyl-CoA pocket. The pyridoxal 5'-phosphate site is built by Cys-258 and Phe-259. Residues Ser-280 and Lys-299 each coordinate succinyl-CoA. Pyridoxal 5'-phosphate is bound by residues Ser-332, His-360, and Thr-388. Lys-391 is a catalytic residue. N6-(pyridoxal phosphate)lysine is present on Lys-391. Pyridoxal 5'-phosphate-binding residues include Thr-420 and Thr-421. Position 508 (Thr-508) interacts with succinyl-CoA.

This sequence belongs to the class-II pyridoxal-phosphate-dependent aminotransferase family. Homodimer. Interacts with SUCLA2. It depends on pyridoxal 5'-phosphate as a cofactor.

Its subcellular location is the mitochondrion inner membrane. It catalyses the reaction succinyl-CoA + glycine + H(+) = 5-aminolevulinate + CO2 + CoA. The protein operates within porphyrin-containing compound metabolism; protoporphyrin-IX biosynthesis; 5-aminolevulinate from glycine: step 1/1. Functionally, catalyzes the pyridoxal 5'-phosphate (PLP)-dependent condensation of succinyl-CoA and glycine to form aminolevulinic acid (ALA), with CoA and CO2 as by-products. Contributes significantly to heme formation during erythropoiesis. The protein is 5-aminolevulinate synthase, erythroid-specific, mitochondrial (ALAS2) of Bos taurus (Bovine).